Here is a 674-residue protein sequence, read N- to C-terminus: Methionine--tRNA ligase (674 aa).

Positions 12-22 (PYANGPIHLGH) match the 'HIGH' region motif. Residues Cys143, Cys146, Cys156, and Cys159 each coordinate Zn(2+). A 'KMSKS' region motif is present at residues 328–332 (KMSKS). Residue Lys331 coordinates ATP. One can recognise a tRNA-binding domain in the interval 573–674 (SFAKLDLRIA…EGARPGMRVK (102 aa)).

Belongs to the class-I aminoacyl-tRNA synthetase family. MetG type 1 subfamily. In terms of assembly, homodimer. The cofactor is Zn(2+).

The protein resides in the cytoplasm. It carries out the reaction tRNA(Met) + L-methionine + ATP = L-methionyl-tRNA(Met) + AMP + diphosphate. Functionally, is required not only for elongation of protein synthesis but also for the initiation of all mRNA translation through initiator tRNA(fMet) aminoacylation. The chain is Methionine--tRNA ligase from Nitrosococcus oceani (strain ATCC 19707 / BCRC 17464 / JCM 30415 / NCIMB 11848 / C-107).